An 80-amino-acid polypeptide reads, in one-letter code: uncharacterized protein (80 aa).

The next 2 membrane-spanning stretches (helical) occupy residues 15–35 and 45–65; these read ALGL…LSGV and WFEM…WAMV.

This sequence to H.influenzae HI_0974B.

Its subcellular location is the cell membrane. This is an uncharacterized protein from Escherichia coli (strain K12).